A 70-amino-acid polypeptide reads, in one-letter code: MQKDIQPEYHQDAVVKCACGNTFTTGSTKKELKVDICSKCHPFFTGQQKIVDVGGRVEKFRKKYNLSADK.

Zn(2+) is bound by residues Cys-17, Cys-19, Cys-37, and Cys-40.

Belongs to the bacterial ribosomal protein bL31 family. Type A subfamily. Part of the 50S ribosomal subunit. Zn(2+) serves as cofactor.

Functionally, binds the 23S rRNA. The sequence is that of Large ribosomal subunit protein bL31 from Clostridium acetobutylicum (strain ATCC 824 / DSM 792 / JCM 1419 / IAM 19013 / LMG 5710 / NBRC 13948 / NRRL B-527 / VKM B-1787 / 2291 / W).